The chain runs to 203 residues: Urease accessory protein UreG (203 aa).

Gly-14–Thr-21 lines the GTP pocket.

It belongs to the SIMIBI class G3E GTPase family. UreG subfamily. In terms of assembly, homodimer. UreD, UreF and UreG form a complex that acts as a GTP-hydrolysis-dependent molecular chaperone, activating the urease apoprotein by helping to assemble the nickel containing metallocenter of UreC. The UreE protein probably delivers the nickel.

The protein resides in the cytoplasm. Functionally, facilitates the functional incorporation of the urease nickel metallocenter. This process requires GTP hydrolysis, probably effectuated by UreG. This is Urease accessory protein UreG from Agrobacterium fabrum (strain C58 / ATCC 33970) (Agrobacterium tumefaciens (strain C58)).